Here is a 477-residue protein sequence, read N- to C-terminus: Aspartyl/glutamyl-tRNA(Asn/Gln) amidotransferase subunit B (477 aa).

Belongs to the GatB/GatE family. GatB subfamily. In terms of assembly, heterotrimer of A, B and C subunits.

The catalysed reaction is L-glutamyl-tRNA(Gln) + L-glutamine + ATP + H2O = L-glutaminyl-tRNA(Gln) + L-glutamate + ADP + phosphate + H(+). The enzyme catalyses L-aspartyl-tRNA(Asn) + L-glutamine + ATP + H2O = L-asparaginyl-tRNA(Asn) + L-glutamate + ADP + phosphate + 2 H(+). Allows the formation of correctly charged Asn-tRNA(Asn) or Gln-tRNA(Gln) through the transamidation of misacylated Asp-tRNA(Asn) or Glu-tRNA(Gln) in organisms which lack either or both of asparaginyl-tRNA or glutaminyl-tRNA synthetases. The reaction takes place in the presence of glutamine and ATP through an activated phospho-Asp-tRNA(Asn) or phospho-Glu-tRNA(Gln). This Ligilactobacillus salivarius (strain UCC118) (Lactobacillus salivarius) protein is Aspartyl/glutamyl-tRNA(Asn/Gln) amidotransferase subunit B.